A 501-amino-acid chain; its full sequence is MRLPKLLTFLLWYLAWLDLEFICTVLGAPDLGQRPQGTRPGLAKAEAKERPPLARNVFRPGGHSYGGGATNANARAKGGTGQTGGLTQPKKDEPKKLPPRPGGPEPKPGHPPQTRQATARTVTPKGQLPGGKAPPKAGSVPSSFLLKKAREPGPPREPKEPFRPPPITPHEYMLSLYRTLSDADRKGGNSSVKLEAGLANTITSFIDKGQDDRGPVVRKQRYVFDISALEKDGLLGAELRILRKKPSDTAKPAAPGGGRAAQLKLSSCPSGRQPAALLDVRSVPGLDGSGWEVFDIWKLFRNFKNSAQLCLELEAWERGRAVDLRGLGFDRAARQVHEKALFLVFGRTKKRDLFFNEIKARSGQDDKTVYEYLFSQRRKRRAPLATRQGKRPSKNLKARCSRKALHVNFKDMGWDDWIIAPLEYEAFHCEGLCEFPLRSHLEPTNHAVIQTLMNSMDPESTPPTCCVPTRLSPISILFIDSANNVVYKQYEDMVVESCGCR.

Positions 1 to 27 (MRLPKLLTFLLWYLAWLDLEFICTVLG) are cleaved as a signal peptide. A propeptide spanning residues 28–381 (APDLGQRPQG…YLFSQRRKRR (354 aa)) is cleaved from the precursor. The tract at residues 29 to 169 (PDLGQRPQGT…EPFRPPPITP (141 aa)) is disordered. Over residues 99–111 (PRPGGPEPKPGHP) the composition is skewed to pro residues. The span at 148–162 (KAREPGPPREPKEPF) shows a compositional bias: basic and acidic residues. N-linked (GlcNAc...) asparagine glycosylation occurs at asparagine 189. The segment at 246–265 (PSDTAKPAAPGGGRAAQLKL) is disordered. 3 disulfides stabilise this stretch: cysteine 400–cysteine 466, cysteine 429–cysteine 498, and cysteine 433–cysteine 500.

This sequence belongs to the TGF-beta family. As to quaternary structure, homodimer; disulfide-linked. Interacts with serine proteases, HTRA1 and HTRA3. Following LPS binding, may form a complex with CXCR4, HSP90AA1 and HSPA8. Interacts with high affinity with NOG; inhibits chondrogenesis. Interacts with high affinity with BMPR1B and lower affinity with BMPR1A; positively regulates chondrocyte differentiation and induces SMAD dependent signaling. Interacts with FBN1 (via N-terminal domain) and FBN2. Interacts with TGFBR3. As to expression, predominantly expressed in long bones during embryonic development. Expressed in monocytes (at protein level).

It is found in the secreted. The protein localises to the cell membrane. Functionally, growth factor involved in bone and cartilage formation. During cartilage development regulates differentiation of chondrogenic tissue through two pathways. Firstly, positively regulates differentiation of chondrogenic tissue through its binding of high affinity with BMPR1B and of less affinity with BMPR1A, leading to induction of SMAD1-SMAD5-SMAD8 complex phosphorylation and then SMAD protein signaling transduction. Secondly, negatively regulates chondrogenic differentiation through its interaction with NOG. Required to prevent excessive muscle loss upon denervation. This function requires SMAD4 and is mediated by phosphorylated SMAD1/5/8. Binds bacterial lipopolysaccharide (LPS) and mediates LPS-induced inflammatory response, including TNF secretion by monocytes. The protein is Growth/differentiation factor 5 (GDF5) of Homo sapiens (Human).